The primary structure comprises 179 residues: Large ribosomal subunit protein uL6 (179 aa).

This sequence belongs to the universal ribosomal protein uL6 family. As to quaternary structure, part of the 50S ribosomal subunit.

Its function is as follows. This protein binds to the 23S rRNA, and is important in its secondary structure. It is located near the subunit interface in the base of the L7/L12 stalk, and near the tRNA binding site of the peptidyltransferase center. The polypeptide is Large ribosomal subunit protein uL6 (Leptospira borgpetersenii serovar Hardjo-bovis (strain JB197)).